The primary structure comprises 124 residues: Small ribosomal subunit protein uS12 (124 aa).

D89 carries the 3-methylthioaspartic acid modification.

Belongs to the universal ribosomal protein uS12 family. Part of the 30S ribosomal subunit. Contacts proteins S8 and S17. May interact with IF1 in the 30S initiation complex.

Its function is as follows. With S4 and S5 plays an important role in translational accuracy. Functionally, interacts with and stabilizes bases of the 16S rRNA that are involved in tRNA selection in the A site and with the mRNA backbone. Located at the interface of the 30S and 50S subunits, it traverses the body of the 30S subunit contacting proteins on the other side and probably holding the rRNA structure together. The combined cluster of proteins S8, S12 and S17 appears to hold together the shoulder and platform of the 30S subunit. This is Small ribosomal subunit protein uS12 from Vibrio cholerae serotype O1 (strain ATCC 39315 / El Tor Inaba N16961).